A 353-amino-acid polypeptide reads, in one-letter code: UPF0283 membrane protein CKO_01392 (353 aa).

Helical transmembrane passes span 70 to 90 (MVMG…VQWT), 99 to 119 (WVAL…VGSV), and 213 to 233 (ESTL…FIAW).

Belongs to the UPF0283 family.

It is found in the cell inner membrane. This chain is UPF0283 membrane protein CKO_01392, found in Citrobacter koseri (strain ATCC BAA-895 / CDC 4225-83 / SGSC4696).